The chain runs to 393 residues: Messenger RNA-binding inhibitor of apoptosis 1 (393 aa).

Positions 12 to 76 (ELYIPQKMKA…EKILRDVWRK (65 aa)) are KH 1-like. The KH 2-like stretch occupies residues 79 to 157 (VQIMIREAAL…MMIECLTEHF (79 aa)). The segment at 259 to 322 (EKIKQWIPTT…NKEQCQEARN (64 aa)) is KH 3-like. Positions 328–393 (MQSHQDKPAS…LTPRKLSPSD (66 aa)) are disordered. Residues 345 to 359 (STPGSPFTSDSSSTT) are compositionally biased toward low complexity.

As to quaternary structure, may interact with wago-4. As to expression, expressed throughout the germline and in oocytes (at protein level).

The protein localises to the cytoplasm. The protein resides in the perinuclear region. Its function is as follows. RNA-binding protein which binds to its own mRNA and target mRNAs to negatively regulate gene expression to modulate apoptosis and differentiation in the germline. Negatively regulates the expression of the argonaute protein wago-4, and may thus play a role in RNA-mediated gene silencing (RNAi) in the germline. The chain is Messenger RNA-binding inhibitor of apoptosis 1 from Caenorhabditis elegans.